Here is a 284-residue protein sequence, read N- to C-terminus: Tropomyosin-2 (284 aa).

A coiled-coil region spans residues 1–284 (MDAIKKKMQA…DQTFAELTGY (284 aa)). The interval 82-110 (ESEVATQNRKVQQIEEDLEKSEERSTTAQ) is disordered.

Belongs to the tropomyosin family. As to quaternary structure, homodimer.

Its function is as follows. Tropomyosin, in association with the troponin complex, plays a central role in the calcium dependent regulation of muscle contraction. May also regulate motor systems required to maintain nuclear integrity and apico-basal polarity during embryogenesis. The protein is Tropomyosin-2 (Tm2) of Drosophila melanogaster (Fruit fly).